The sequence spans 129 residues: Large ribosomal subunit protein uL22 (129 aa).

The protein belongs to the universal ribosomal protein uL22 family. In terms of assembly, part of the 50S ribosomal subunit.

Functionally, this protein binds specifically to 23S rRNA; its binding is stimulated by other ribosomal proteins, e.g. L4, L17, and L20. It is important during the early stages of 50S assembly. It makes multiple contacts with different domains of the 23S rRNA in the assembled 50S subunit and ribosome. The globular domain of the protein is located near the polypeptide exit tunnel on the outside of the subunit, while an extended beta-hairpin is found that lines the wall of the exit tunnel in the center of the 70S ribosome. The polypeptide is Large ribosomal subunit protein uL22 (Bartonella quintana (strain Toulouse) (Rochalimaea quintana)).